Reading from the N-terminus, the 577-residue chain is Beta-fructofuranosidase, insoluble isoenzyme 1 (577 aa).

The N-terminal stretch at 1–22 is a signal peptide; it reads MGTRLLALAPWLLLLLLQLAGA. The active site involves Asp63. N-linked (GlcNAc...) asparagine glycosylation is found at Asn158, Asn183, and Asn333.

It belongs to the glycosyl hydrolase 32 family. In terms of tissue distribution, expressed in roots, leaves and flowers. Weakly expressed in seeds.

The protein localises to the secreted. The protein resides in the extracellular space. It is found in the apoplast. Its subcellular location is the cell wall. The catalysed reaction is Hydrolysis of terminal non-reducing beta-D-fructofuranoside residues in beta-D-fructofuranosides.. Its function is as follows. May play a role in sucrose partitioning during seed development and in stress response. This is Beta-fructofuranosidase, insoluble isoenzyme 1 (CIN1) from Oryza sativa subsp. japonica (Rice).